Here is a 428-residue protein sequence, read N- to C-terminus: Enolase (428 aa).

Gln-163 serves as a coordination point for (2R)-2-phosphoglycerate. Residue Glu-205 is the Proton donor of the active site. Residues Asp-242, Glu-285, and Asp-312 each coordinate Mg(2+). Lys-337, Arg-366, Ser-367, and Lys-388 together coordinate (2R)-2-phosphoglycerate. The active-site Proton acceptor is the Lys-337.

The protein belongs to the enolase family. The cofactor is Mg(2+).

The protein localises to the cytoplasm. The protein resides in the secreted. It is found in the cell surface. It carries out the reaction (2R)-2-phosphoglycerate = phosphoenolpyruvate + H2O. Its pathway is carbohydrate degradation; glycolysis; pyruvate from D-glyceraldehyde 3-phosphate: step 4/5. Catalyzes the reversible conversion of 2-phosphoglycerate (2-PG) into phosphoenolpyruvate (PEP). It is essential for the degradation of carbohydrates via glycolysis. The protein is Enolase of Persephonella marina (strain DSM 14350 / EX-H1).